Here is a 118-residue protein sequence, read N- to C-terminus: Putative pterin-4-alpha-carbinolamine dehydratase (118 aa).

Belongs to the pterin-4-alpha-carbinolamine dehydratase family.

It catalyses the reaction (4aS,6R)-4a-hydroxy-L-erythro-5,6,7,8-tetrahydrobiopterin = (6R)-L-erythro-6,7-dihydrobiopterin + H2O. This is Putative pterin-4-alpha-carbinolamine dehydratase from Pseudomonas putida (strain ATCC 700007 / DSM 6899 / JCM 31910 / BCRC 17059 / LMG 24140 / F1).